The sequence spans 141 residues: Hemoglobin subunit alpha (141 aa).

One can recognise a Globin domain in the interval 1–141 (VLSAADKTNV…VATVLTSKYR (141 aa)). At Ser-3 the chain carries Phosphoserine. Residue Lys-7 is modified to N6-succinyllysine. A Phosphothreonine modification is found at Thr-8. N6-succinyllysine is present on Lys-11. Lys-16 is modified (N6-acetyllysine; alternate). The residue at position 16 (Lys-16) is an N6-succinyllysine; alternate. Residue Tyr-24 is modified to Phosphotyrosine. Ser-35 is modified (phosphoserine). At Lys-40 the chain carries N6-succinyllysine. Ser-49 carries the phosphoserine modification. His-58 serves as a coordination point for O2. His-87 serves as a coordination point for heme b. A Phosphoserine modification is found at Ser-102. Position 108 is a phosphothreonine (Thr-108). Ser-124 bears the Phosphoserine mark. A phosphothreonine mark is found at Thr-134 and Thr-137. Position 138 is a phosphoserine (Ser-138).

Belongs to the globin family. In terms of assembly, heterotetramer of two alpha chains and two beta chains. As to expression, red blood cells.

In terms of biological role, involved in oxygen transport from the lung to the various peripheral tissues. Its function is as follows. Hemopressin acts as an antagonist peptide of the cannabinoid receptor CNR1. Hemopressin-binding efficiently blocks cannabinoid receptor CNR1 and subsequent signaling. This Ctenodactylus gundi (Northern gundi) protein is Hemoglobin subunit alpha (HBA).